The sequence spans 336 residues: MEDFIKGLAERVLEGEKLSKEDGLKILSIPDEYLDLLVQEASKVREAVFGDEVEFCSLINAKNGACSEDCSFCAQSSKYPTPINAYGLVPKKELVEGAQKAVSIKANRYCIVTSGKRATKEEVEQIADAVREITENLPVRVCVSIGTVDEEDLKLLKDSGVDRVNHNLETSERHFKNIVTTHSYKERLETIKTVQKVGLSTCTGGIFGIGETDEDIVDLASVYRELNVNSIPMNFLIPIPGTPLEGNKQLTPQRCLKIISLFKLFNPQAELRLCGGREINLREYHDTAMEIANCVMAGGYLTRAGRAPGKDEEMVRRLGRKLITGRDLFSKYKTAV.

In terms of domain architecture, Radical SAM core spans 48–277; the sequence is VFGDEVEFCS…QAELRLCGGR (230 aa). The [4Fe-4S] cluster site is built by Cys66, Cys70, and Cys73. Cys110, Cys142, Cys202, and Arg272 together coordinate [2Fe-2S] cluster.

Belongs to the radical SAM superfamily. Biotin synthase family. In terms of assembly, homodimer. It depends on [4Fe-4S] cluster as a cofactor. The cofactor is [2Fe-2S] cluster.

The catalysed reaction is (4R,5S)-dethiobiotin + (sulfur carrier)-SH + 2 reduced [2Fe-2S]-[ferredoxin] + 2 S-adenosyl-L-methionine = (sulfur carrier)-H + biotin + 2 5'-deoxyadenosine + 2 L-methionine + 2 oxidized [2Fe-2S]-[ferredoxin]. The protein operates within cofactor biosynthesis; biotin biosynthesis; biotin from 7,8-diaminononanoate: step 2/2. Functionally, catalyzes the conversion of dethiobiotin (DTB) to biotin by the insertion of a sulfur atom into dethiobiotin via a radical-based mechanism. The sequence is that of Biotin synthase from Persephonella marina (strain DSM 14350 / EX-H1).